Reading from the N-terminus, the 261-residue chain is Cytochrome c oxidase subunit 3 (261 aa).

Residues 1–15 are Mitochondrial matrix-facing; sequence MAHQAHAYHMVDPSP. Residues 16–34 traverse the membrane as a helical segment; the sequence is WPLTGAVAALLLTSGLAVW. Over 35-40 the chain is Mitochondrial intermembrane; that stretch reads FHFKSL. A helical transmembrane segment spans residues 41–66; the sequence is TLLAMGLLLMILTMIQWWRDIIREGT. Topologically, residues 67–72 are mitochondrial matrix; sequence FQGHHT. Residues 73–105 form a helical membrane-spanning segment; that stretch reads PPVQKGLRYGMILFITSEVFFFLGFFWAFYHSS. Topologically, residues 106 to 128 are mitochondrial intermembrane; sequence LAPTPELGGIWPPTGITPLDPFE. Residues 129–152 traverse the membrane as a helical segment; it reads VPLLNTAVLLASGVTVTWTHHSLM. Residues 153 to 155 lie on the Mitochondrial matrix side of the membrane; it reads EGK. The chain crosses the membrane as a helical span at residues 156-183; that stretch reads RTEATQALTLTILLGLYFTALQAMEYYE. The Mitochondrial intermembrane segment spans residues 184 to 190; it reads APFTIAD. The helical transmembrane segment at 191-223 threads the bilayer; the sequence is GVYGTTFFVATGFHGLHVIIGSTFLAGCLLRQI. Over 224–232 the chain is Mitochondrial matrix; sequence LYHFTSSHH. Residues 233-256 traverse the membrane as a helical segment; that stretch reads FGFEAAAWYWHFVDVVWLFLYVSI. Residues 257–261 lie on the Mitochondrial intermembrane side of the membrane; sequence YWWGS.

Belongs to the cytochrome c oxidase subunit 3 family. In terms of assembly, component of the cytochrome c oxidase (complex IV, CIV), a multisubunit enzyme composed of 14 subunits. The complex is composed of a catalytic core of 3 subunits MT-CO1, MT-CO2 and MT-CO3, encoded in the mitochondrial DNA, and 11 supernumerary subunits COX4I, COX5A, COX5B, COX6A, COX6B, COX6C, COX7A, COX7B, COX7C, COX8 and NDUFA4, which are encoded in the nuclear genome. The complex exists as a monomer or a dimer and forms supercomplexes (SCs) in the inner mitochondrial membrane with NADH-ubiquinone oxidoreductase (complex I, CI) and ubiquinol-cytochrome c oxidoreductase (cytochrome b-c1 complex, complex III, CIII), resulting in different assemblies (supercomplex SCI(1)III(2)IV(1) and megacomplex MCI(2)III(2)IV(2)).

It localises to the mitochondrion inner membrane. The catalysed reaction is 4 Fe(II)-[cytochrome c] + O2 + 8 H(+)(in) = 4 Fe(III)-[cytochrome c] + 2 H2O + 4 H(+)(out). Component of the cytochrome c oxidase, the last enzyme in the mitochondrial electron transport chain which drives oxidative phosphorylation. The respiratory chain contains 3 multisubunit complexes succinate dehydrogenase (complex II, CII), ubiquinol-cytochrome c oxidoreductase (cytochrome b-c1 complex, complex III, CIII) and cytochrome c oxidase (complex IV, CIV), that cooperate to transfer electrons derived from NADH and succinate to molecular oxygen, creating an electrochemical gradient over the inner membrane that drives transmembrane transport and the ATP synthase. Cytochrome c oxidase is the component of the respiratory chain that catalyzes the reduction of oxygen to water. Electrons originating from reduced cytochrome c in the intermembrane space (IMS) are transferred via the dinuclear copper A center (CU(A)) of subunit 2 and heme A of subunit 1 to the active site in subunit 1, a binuclear center (BNC) formed by heme A3 and copper B (CU(B)). The BNC reduces molecular oxygen to 2 water molecules using 4 electrons from cytochrome c in the IMS and 4 protons from the mitochondrial matrix. The sequence is that of Cytochrome c oxidase subunit 3 (mt-co3) from Polypterus ornatipinnis (Ornate bichir).